The primary structure comprises 757 residues: Neutral ceramidase 2 (757 aa).

The N-terminal stretch at 1-25 (MAVSLPLFQFILFLLLLLLSRTVYA) is a signal peptide. Residue Asn-311 is glycosylated (N-linked (GlcNAc...) asparagine). The active-site Nucleophile is Ser-330. N-linked (GlcNAc...) asparagine glycosylation is found at Asn-348 and Asn-657.

The protein belongs to the neutral ceramidase family.

It localises to the secreted. Its subcellular location is the endoplasmic reticulum. The protein localises to the golgi apparatus. It carries out the reaction an N-acylsphing-4-enine + H2O = sphing-4-enine + a fatty acid. Hydrolyzes the sphingolipid ceramide into sphingosine and free fatty acid. In Arabidopsis thaliana (Mouse-ear cress), this protein is Neutral ceramidase 2.